The primary structure comprises 231 residues: Endo-1,4-beta-xylanase 4 (231 aa).

Residues 1 to 18 (MVSFTTILVAATAALVAA) form the signal peptide. Positions 42–230 (GGTPSSTGTH…SSGSSTVTIQ (189 aa)) constitute a GH11 domain. Asn-99 is a glycosylation site (N-linked (GlcNAc...) asparagine). Glu-126 serves as the catalytic Nucleophile. Glu-217 acts as the Proton donor in catalysis.

Belongs to the glycosyl hydrolase 11 (cellulase G) family.

The protein resides in the secreted. The enzyme catalyses Endohydrolysis of (1-&gt;4)-beta-D-xylosidic linkages in xylans.. It functions in the pathway glycan degradation; xylan degradation. Endo-1,4-beta-xylanase involved in the hydrolysis of xylan, a major structural heterogeneous polysaccharide found in plant biomass representing the second most abundant polysaccharide in the biosphere, after cellulose. The protein is Endo-1,4-beta-xylanase 4 (XYL4) of Pyricularia grisea (Crabgrass-specific blast fungus).